The primary structure comprises 238 residues: Histidine/lysine/arginine/ornithine transport system permease protein HisM (238 aa).

The Periplasmic segment spans residues 1-26; sequence MIEILHEYWKPLLWTDGYRFTGVAIT. The ABC transmembrane type-1 domain maps to 23 to 221; the sequence is VAITLWLLIL…IISYVLISLF (199 aa). The helical transmembrane segment at 27–47 threads the bilayer; that stretch reads LWLLILSVVIGGVLALFLAIG. The Cytoplasmic portion of the chain corresponds to 48–58; the sequence is RVSSNKYIQFP. A helical membrane pass occupies residues 59–79; the sequence is IWLFTYIFRGTPLYVQLLVFY. The Periplasmic segment spans residues 80 to 104; that stretch reads SGMYTLEIVKGTEFLNAFFRSGLNC. The helical transmembrane segment at 105–125 threads the bilayer; the sequence is TVLALTLNTCAYTTEIFAGAI. Residues 126–157 are Cytoplasmic-facing; it reads RSVPHGEIEAARAYGFSTFKMYRCIILPSALR. Residues 158-178 form a helical membrane-spanning segment; sequence IALPAYSNEVILMLHSTALAF. Residues 179–199 lie on the Periplasmic side of the membrane; sequence TATVPDLLKIARDINAATYQP. The chain crosses the membrane as a helical span at residues 200–220; that stretch reads FTAFGIAAVLYLIISYVLISL. Residues 221 to 238 are Cytoplasmic-facing; the sequence is FRRAEKRWLQHVKPSSTH.

The protein belongs to the binding-protein-dependent transport system permease family. HisMQ subfamily. In terms of assembly, the HisPMQJ complex is composed of two ATP-binding proteins (HisP), two transmembrane proteins (HisM and HisQ) and a solute-binding protein (HisJ). The HisPMQ-ArgT complex is composed of two ATP-binding proteins (HisP), two transmembrane proteins (HisM and HisQ) and a solute-binding protein (ArgT).

It is found in the cell inner membrane. In terms of biological role, part of the ABC transporter complex HisPMQJ involved in histidine transport. Is also part of the ABC transporter complex HisPMQ-ArgT involved in lysine/arginine/ornithine transport. Probably responsible for the translocation of the substrate across the membrane. The polypeptide is Histidine/lysine/arginine/ornithine transport system permease protein HisM (hisM) (Escherichia coli O157:H7).